The primary structure comprises 296 residues: Cytidine deaminase (296 aa).

CMP/dCMP-type deaminase domains follow at residues 47-167 and 186-296; these read EESE…FGPS and DSSD…IDPA. 88–90 lines the substrate pocket; sequence NLE. H101 contributes to the Zn(2+) binding site. E103 acts as the Proton donor in catalysis. 2 residues coordinate Zn(2+): C128 and C131.

Belongs to the cytidine and deoxycytidylate deaminase family. In terms of assembly, homodimer. The cofactor is Zn(2+).

It catalyses the reaction cytidine + H2O + H(+) = uridine + NH4(+). The enzyme catalyses 2'-deoxycytidine + H2O + H(+) = 2'-deoxyuridine + NH4(+). Its function is as follows. This enzyme scavenges exogenous and endogenous cytidine and 2'-deoxycytidine for UMP synthesis. The chain is Cytidine deaminase from Shewanella woodyi (strain ATCC 51908 / MS32).